The chain runs to 194 residues: Peptidyl-tRNA hydrolase (194 aa).

Tyr-17 is a binding site for tRNA. His-22 (proton acceptor) is an active-site residue. Residues Phe-68, Asn-70, and Asn-116 each coordinate tRNA.

The protein belongs to the PTH family. Monomer.

It is found in the cytoplasm. The enzyme catalyses an N-acyl-L-alpha-aminoacyl-tRNA + H2O = an N-acyl-L-amino acid + a tRNA + H(+). In terms of biological role, hydrolyzes ribosome-free peptidyl-tRNAs (with 1 or more amino acids incorporated), which drop off the ribosome during protein synthesis, or as a result of ribosome stalling. Catalyzes the release of premature peptidyl moieties from peptidyl-tRNA molecules trapped in stalled 50S ribosomal subunits, and thus maintains levels of free tRNAs and 50S ribosomes. In Mannheimia succiniciproducens (strain KCTC 0769BP / MBEL55E), this protein is Peptidyl-tRNA hydrolase.